Consider the following 212-residue polypeptide: Orotate phosphoribosyltransferase (212 aa).

Lys-26 contributes to the 5-phospho-alpha-D-ribose 1-diphosphate binding site. 34–35 (FF) contributes to the orotate binding site. 5-phospho-alpha-D-ribose 1-diphosphate contacts are provided by residues 72–73 (YK), Arg-98, Lys-99, Lys-102, His-104, and 123–131 (DDVISAGTS). 2 residues coordinate orotate: Ser-127 and Arg-155.

This sequence belongs to the purine/pyrimidine phosphoribosyltransferase family. PyrE subfamily. Homodimer. It depends on Mg(2+) as a cofactor.

The enzyme catalyses orotidine 5'-phosphate + diphosphate = orotate + 5-phospho-alpha-D-ribose 1-diphosphate. It functions in the pathway pyrimidine metabolism; UMP biosynthesis via de novo pathway; UMP from orotate: step 1/2. Its function is as follows. Catalyzes the transfer of a ribosyl phosphate group from 5-phosphoribose 1-diphosphate to orotate, leading to the formation of orotidine monophosphate (OMP). The sequence is that of Orotate phosphoribosyltransferase from Thiobacillus denitrificans (strain ATCC 25259 / T1).